The following is a 238-amino-acid chain: Ribonuclease PH (238 aa).

Residues Arg86 and 124–126 (GTR) contribute to the phosphate site.

This sequence belongs to the RNase PH family. Homohexameric ring arranged as a trimer of dimers.

The enzyme catalyses tRNA(n+1) + phosphate = tRNA(n) + a ribonucleoside 5'-diphosphate. Its function is as follows. Phosphorolytic 3'-5' exoribonuclease that plays an important role in tRNA 3'-end maturation. Removes nucleotide residues following the 3'-CCA terminus of tRNAs; can also add nucleotides to the ends of RNA molecules by using nucleoside diphosphates as substrates, but this may not be physiologically important. Probably plays a role in initiation of 16S rRNA degradation (leading to ribosome degradation) during starvation. The chain is Ribonuclease PH from Salmonella gallinarum (strain 287/91 / NCTC 13346).